The sequence spans 452 residues: D-inositol 3-phosphate glycosyltransferase (452 aa).

Histidine 25 contacts 1D-myo-inositol 3-phosphate. Residues 31–32 (QP) and glycine 39 contribute to the UDP-N-acetyl-alpha-D-glucosamine site. Residues 36-41 (DAGGMN), lysine 94, tyrosine 127, threonine 151, and arginine 171 each bind 1D-myo-inositol 3-phosphate. Residues arginine 245, lysine 250, and glutamine 309 each contribute to the UDP-N-acetyl-alpha-D-glucosamine site. Mg(2+) is bound by residues tyrosine 318, arginine 319, and serine 321. Glutamate 331 and glutamate 339 together coordinate UDP-N-acetyl-alpha-D-glucosamine. Threonine 345 serves as a coordination point for Mg(2+).

It belongs to the glycosyltransferase group 1 family. MshA subfamily. As to quaternary structure, homodimer.

It carries out the reaction 1D-myo-inositol 3-phosphate + UDP-N-acetyl-alpha-D-glucosamine = 1D-myo-inositol 2-acetamido-2-deoxy-alpha-D-glucopyranoside 3-phosphate + UDP + H(+). In terms of biological role, catalyzes the transfer of a N-acetyl-glucosamine moiety to 1D-myo-inositol 3-phosphate to produce 1D-myo-inositol 2-acetamido-2-deoxy-glucopyranoside 3-phosphate in the mycothiol biosynthesis pathway. The polypeptide is D-inositol 3-phosphate glycosyltransferase (Rhodococcus jostii (strain RHA1)).